The following is a 230-amino-acid chain: Cytidylate kinase (230 aa).

ATP is bound at residue 16–24 (GPASAGKST).

Belongs to the cytidylate kinase family. Type 1 subfamily.

Its subcellular location is the cytoplasm. It catalyses the reaction CMP + ATP = CDP + ADP. It carries out the reaction dCMP + ATP = dCDP + ADP. In Lactobacillus johnsonii (strain CNCM I-12250 / La1 / NCC 533), this protein is Cytidylate kinase.